We begin with the raw amino-acid sequence, 181 residues long: Segregation and condensation protein B (181 aa).

The protein belongs to the ScpB family. Homodimer. Homodimerization may be required to stabilize the binding of ScpA to the Smc head domains. Component of a cohesin-like complex composed of ScpA, ScpB and the Smc homodimer, in which ScpA and ScpB bind to the head domain of Smc. The presence of the three proteins is required for the association of the complex with DNA.

It localises to the cytoplasm. In terms of biological role, participates in chromosomal partition during cell division. May act via the formation of a condensin-like complex containing Smc and ScpA that pull DNA away from mid-cell into both cell halves. This Desulforamulus reducens (strain ATCC BAA-1160 / DSM 100696 / MI-1) (Desulfotomaculum reducens) protein is Segregation and condensation protein B.